A 540-amino-acid chain; its full sequence is MAAKDVKFGNDARVKMLRGVNVLADAVKVTLGPKGRNVVLDKSFGAPTITKDGVSVAREIELEDKFENMGAQMVKEVASKANDAAGDGTTTATVLAQSIITEGLKAVAAGMNPMDLKRGIDKAVVAAVEELKKLSVPCSDSKAIAQVGTISANSDETVGKLIAEAMEKVGKEGVITVEEGTGLQDELDVVEGMQFDRGYLSPYFINKPETGSVELESPFILLADKKISNIREMLPVLEAVAKAGKPLLIIAEDVEGEALATLVVNTMRGIVKVAAVKAPGFGDRRKDMLQDIATLTAGTVISEEIGLELEKATLEDLGQAKRVVINKDTTIIIDGVGDEATIQGRVAQIRQQIEEATSDYDREKLQERVAKLAGGVAVIKVGAATEVEMKEKKARVEDALHATRAAVEEGVVAGGGVALIRVAGKIAALKGDNEDQNVGIKVALRAMEAPLRQIVVNAGEEASVIANQVKAGEGSYGYNAYSEEYGDMIAMGILDPTKVTRSALQYAASVAGLMITTECMVTDLPKADAPDLGAXGGMGG.

ATP-binding positions include 30–33, Lys-51, 87–91, Gly-415, and Asp-495; these read TLGP and DGTTT.

It belongs to the chaperonin (HSP60) family. As to quaternary structure, forms a cylinder of 14 subunits composed of two heptameric rings stacked back-to-back. Interacts with the co-chaperonin GroES.

Its subcellular location is the cytoplasm. The enzyme catalyses ATP + H2O + a folded polypeptide = ADP + phosphate + an unfolded polypeptide.. In terms of biological role, together with its co-chaperonin GroES, plays an essential role in assisting protein folding. The GroEL-GroES system forms a nano-cage that allows encapsulation of the non-native substrate proteins and provides a physical environment optimized to promote and accelerate protein folding. This Serratia marcescens protein is Chaperonin GroEL.